Consider the following 115-residue polypeptide: Divalent-cation tolerance protein CutA (115 aa).

Cu cation contacts are provided by C19, H86, and H87.

It belongs to the CutA family. Homotrimer. It depends on Cu cation as a cofactor.

The protein localises to the cytoplasm. Involved in resistance toward heavy metals. The chain is Divalent-cation tolerance protein CutA from Salmonella agona (strain SL483).